Here is a 1025-residue protein sequence, read N- to C-terminus: Myosin phosphatase Rho-interacting protein (1025 aa).

Positions 2–383 (SAAKENPCRK…DRRSTEPSVT (382 aa)) are interaction with F-actin. A PH 1 domain is found at 43–150 (KPIYGGWLLL…WLEMLMVYPR (108 aa)). Disordered stretches follow at residues 152–302 (NKQN…RRSQ) and 317–383 (HMET…PSVT). Residues 179-189 (SSSSSSSSSSS) show a composition bias toward low complexity. Ser-192, Ser-217, Ser-218, Ser-220, Ser-224, and Ser-226 each carry phosphoserine. Low complexity predominate over residues 217–236 (SSLSPAQSPSQSQPPAASSL). The span at 239-263 (PGLESKEEESAMSSDRMDCGRKVRV) shows a compositional bias: basic and acidic residues. Ser-265 and Ser-269 each carry phosphoserine. The span at 271–281 (EKTKQDLKAEE) shows a compositional bias: basic and acidic residues. Positions 284-294 (LPPPLSPPSPS) are enriched in pro residues. A phosphoserine mark is found at Ser-289 and Ser-292. Thr-295 carries the phosphothreonine modification. The residue at position 326 (Ser-326) is a Phosphoserine. Basic and acidic residues predominate over residues 332-348 (RQGRSEKRAFPRKRDFT). Residue Thr-348 is modified to Phosphothreonine. A phosphoserine mark is found at Ser-362 and Ser-365. The PH 2 domain occupies 387-483 (LNFKKGWLTK…WIQTIMKHVH (97 aa)). Disordered regions lie at residues 485–545 (TTAP…TFDW) and 560–591 (VGGV…RREE). Ser-493 is modified (phosphoserine). Composition is skewed to basic and acidic residues over residues 524–545 (PEQK…TFDW) and 567–589 (DTHE…ARRR). An interaction with RHOA region spans residues 546-824 (AEFRPIQQAL…SVQRELEVLS (279 aa)). Phosphoserine is present on Ser-619. Phosphothreonine is present on Thr-646. A phosphoserine mark is found at Ser-663 and Ser-800. A coiled-coil region spans residues 673–977 (HELTSLLEKE…AATEALGEKS (305 aa)). Residues 824-879 (SEQYSQKCLENAHLAQALEAERQALRQCQRENQELNAHNQELNNRLAAEITRLRTL) are interaction with PPP1R12A. Residues Ser-891, Ser-977, Ser-993, Ser-1014, and Ser-1016 each carry the phosphoserine modification.

In terms of assembly, binds F-actin through its N-terminus. Interacts with MYZAP. Binds RHOA, PPP1R12A/MBS and PPP1R12C/MBS85 through adjacent coiled coil domains.

It is found in the cytoplasm. Its subcellular location is the cytoskeleton. Functionally, targets myosin phosphatase to the actin cytoskeleton. Required for the regulation of the actin cytoskeleton by RhoA and ROCK1. Depletion leads to an increased number of stress fibers in smooth muscle cells through stabilization of actin fibers by phosphorylated myosin. Overexpression of MRIP as well as its F-actin-binding region leads to disassembly of stress fibers in neuronal cells. The polypeptide is Myosin phosphatase Rho-interacting protein (MPRIP) (Homo sapiens (Human)).